We begin with the raw amino-acid sequence, 295 residues long: Pyridoxal 5'-phosphate synthase subunit PdxS (295 aa).

D25 is a binding site for D-ribose 5-phosphate. K82 functions as the Schiff-base intermediate with D-ribose 5-phosphate in the catalytic mechanism. Residue G154 participates in D-ribose 5-phosphate binding. R166 is a D-glyceraldehyde 3-phosphate binding site. D-ribose 5-phosphate contacts are provided by residues G215 and 236–237; that span reads GS.

This sequence belongs to the PdxS/SNZ family. In terms of assembly, in the presence of PdxT, forms a dodecamer of heterodimers.

It catalyses the reaction aldehydo-D-ribose 5-phosphate + D-glyceraldehyde 3-phosphate + L-glutamine = pyridoxal 5'-phosphate + L-glutamate + phosphate + 3 H2O + H(+). It participates in cofactor biosynthesis; pyridoxal 5'-phosphate biosynthesis. Catalyzes the formation of pyridoxal 5'-phosphate from ribose 5-phosphate (RBP), glyceraldehyde 3-phosphate (G3P) and ammonia. The ammonia is provided by the PdxT subunit. Can also use ribulose 5-phosphate and dihydroxyacetone phosphate as substrates, resulting from enzyme-catalyzed isomerization of RBP and G3P, respectively. This chain is Pyridoxal 5'-phosphate synthase subunit PdxS, found in Shouchella clausii (strain KSM-K16) (Alkalihalobacillus clausii).